Here is a 76-residue protein sequence, read N- to C-terminus: MHRWISQNNIRLPCGAFFISVLFFFNAVCIVSDNLLIIESFGEMAYNISYLTRVPGTNTLLACCCLLRPEEVNSEY.

A helical membrane pass occupies residues 12-32 (LPCGAFFISVLFFFNAVCIVS).

The protein resides in the cell membrane. This is an uncharacterized protein from Escherichia coli O157:H7.